The following is a 392-amino-acid chain: Elongation factor Tu (392 aa).

Residues lysine 10–isoleucine 202 form the tr-type G domain. Residues glycine 19–threonine 26 are G1. Glycine 19–threonine 26 lines the GTP pocket. Mg(2+) is bound at residue threonine 26. The tract at residues glycine 60–asparagine 64 is G2. The segment at aspartate 81 to glycine 84 is G3. GTP is bound by residues aspartate 81–histidine 85 and asparagine 136–aspartate 139. The segment at asparagine 136–aspartate 139 is G4. Residues serine 174–leucine 176 form a G5 region.

This sequence belongs to the TRAFAC class translation factor GTPase superfamily. Classic translation factor GTPase family. EF-Tu/EF-1A subfamily. As to quaternary structure, monomer.

It is found in the cytoplasm. The enzyme catalyses GTP + H2O = GDP + phosphate + H(+). Its function is as follows. GTP hydrolase that promotes the GTP-dependent binding of aminoacyl-tRNA to the A-site of ribosomes during protein biosynthesis. This Apple proliferation phytoplasma protein is Elongation factor Tu.